We begin with the raw amino-acid sequence, 116 residues long: NADH dehydrogenase [ubiquinone] 1 alpha subcomplex subunit 5 (116 aa).

A2 bears the N-acetylalanine mark. An N6-acetyllysine mark is found at K30, K46, and K60. A Phosphoserine modification is found at S89. Position 98 is an N6-acetyllysine; alternate (K98). K98 is modified (N6-succinyllysine; alternate).

It belongs to the complex I NDUFA5 subunit family. In terms of assembly, complex I is composed of 45 different subunits.

The protein resides in the mitochondrion inner membrane. In terms of biological role, accessory subunit of the mitochondrial membrane respiratory chain NADH dehydrogenase (Complex I), that is believed not to be involved in catalysis. Complex I functions in the transfer of electrons from NADH to the respiratory chain. The immediate electron acceptor for the enzyme is believed to be ubiquinone. This Rattus norvegicus (Rat) protein is NADH dehydrogenase [ubiquinone] 1 alpha subcomplex subunit 5 (Ndufa5).